A 266-amino-acid chain; its full sequence is MAGAEQSQRWSLKAKTVLVTGGTKGIGHAIVEEFAGFGAVIHTCARNEYELNECLSKWQKKGFQVTGSVCDASLRPEREKLMQTVSSMFGGKLDILINNLGAIRSKPTLDYTAEDFSFHISTNLESAYHLSQLAHPLLKASGCGNIIFMSSIAGVVSASVGSIYSATKGALNQLARNLACEWASDGIRANAVAPAVIATPLAEAVYDDEFKKVVISRKPLGRFGEPEEVSSLVAFLCMPAASYITGQTICVDGGLTVNGFSYQPQG.

Position 18–42 (18–42 (LVTGGTKGIGHAIVEEFAGFGAVIH)) interacts with NADP(+). A substrate-binding site is contributed by Ser151. Catalysis depends on Tyr164, which acts as the Proton acceptor.

The protein belongs to the short-chain dehydrogenases/reductases (SDR) family. SDR65C subfamily.

The protein is Tropinone reductase homolog At1g07440 of Arabidopsis thaliana (Mouse-ear cress).